The following is a 589-amino-acid chain: Capsid scaffolding protein (589 aa).

Residues His-47, Ser-118, and His-142 each act as charge relay system in the active site. Residues 264–273 (EKERPKEPEQ) are compositionally biased toward basic and acidic residues. A disordered region spans residues 264-283 (EKERPKEPEQSHVPTESMSH). An interaction with pAP region spans residues 307–326 (HDGVYLPKDAFFSLIGASRP). Disordered stretches follow at residues 421–478 (RSRS…GDRY) and 514–552 (ASPT…AERG). 2 consecutive short sequence motifs (nuclear localization signal) follow at residues 428–433 (KRRRER) and 453–459 (KARKRLK). The segment covering 453 to 462 (KARKRLKAHH) has biased composition (basic residues). The span at 514–543 (ASPTTTTSHQAEASEPQASTAAAAPSTASS) shows a compositional bias: low complexity. Residues 569 to 589 (PPKDMVDLNRRLFVAALNKME) are interaction with major capsid protein.

Belongs to the herpesviridae capsid scaffolding protein family. Homomultimer. Interacts with major capsid protein. As to quaternary structure, exists in a monomer-dimer equilibrium with the dimer being the active species. Capsid scaffolding protein is cleaved by assemblin after formation of the spherical procapsid. As a result, the capsid obtains its mature, icosahedral shape. Cleavages occur at two or more sites: release (R-site) and maturation (M-site).

Its subcellular location is the host cytoplasm. It is found in the host nucleus. The enzyme catalyses Cleaves -Ala-|-Ser- and -Ala-|-Ala- bonds in the scaffold protein.. Acts as a scaffold protein by binding major capsid protein in the cytoplasm, inducing the nuclear localization of both proteins. Multimerizes in the nucleus such as major capsid protein forms the icosahedral T=16 capsid. Autocatalytic cleavage releases the assembly protein, and subsequently abolishes interaction with major capsid protein. Cleavages products are evicted from the capsid before or during DNA packaging. Its function is as follows. Protease that plays an essential role in virion assembly within the nucleus. Catalyzes the cleavage of the assembly protein after formation of the spherical procapsid. By that cleavage, the capsid matures and gains its icosahedral shape. The cleavage sites seem to include -Ala-Ser-, -Ala-Ala-, as well as Ala-Thr bonds. Assemblin and cleavages products are evicted from the capsid before or during DNA packaging. Functionally, plays a major role in capsid assembly. Acts as a scaffold protein by binding major capsid protein. Multimerizes in the nucleus such as major capsid protein forms the icosahedral T=16 capsid. Cleaved by assemblin after capsid completion. The cleavages products are evicted from the capsid before or during DNA packaging. The polypeptide is Capsid scaffolding protein (UL80) (Simian cytomegalovirus (strain Colburn)).